The primary structure comprises 758 residues: Thiosulfate reductase molybdopterin-containing subunit PhsA (758 aa).

The segment at residues 1 to 30 is a signal peptide (tat-type signal); it reads MSISRRSFLQGVGIGCSACALGAFPPGALA. The 4Fe-4S Mo/W bis-MGD-type domain maps to 41–97; it reads TTLTPSLCEMCSFRCPIQAQVVNNKTVFIQGNPSAPQQGTRICARGGSGVSLVNDPQ. [4Fe-4S] cluster contacts are provided by C48, C51, C55, and C83.

It belongs to the prokaryotic molybdopterin-containing oxidoreductase family. As to quaternary structure, composed of three subunits: PhsA, PhsB and PhsC. It depends on [4Fe-4S] cluster as a cofactor. Mo-bis(molybdopterin guanine dinucleotide) is required as a cofactor. In terms of processing, predicted to be exported by the Tat system. The position of the signal peptide cleavage has not been experimentally proven.

It localises to the periplasm. The catalysed reaction is a quinone + hydrogen sulfide + sulfite + 2 H(+) = thiosulfate + a quinol. In terms of biological role, component of the PhsABC thiosulfate reductase that catalyzes the reduction of thiosulfate to sulfite and hydrogen sulfide, with menaquinol as the sole electron donor. Proton motive force (PMF) is required to drive transmembrane electron transfer within the reductase. The PhsA subunit contains the active site molybdenum-bis(molybdopterin guanine dinucleotide) (Mo-bis-MGD) cofactor. In Salmonella typhimurium (strain LT2 / SGSC1412 / ATCC 700720), this protein is Thiosulfate reductase molybdopterin-containing subunit PhsA.